The sequence spans 278 residues: Putative cysteine-rich repeat secretory protein 17 (278 aa).

The first 32 residues, 1 to 32, serve as a signal peptide directing secretion; sequence MYSLSSVSKHLILVHILALVATQLLLIRSVSS. Gnk2-homologous domains are found at residues 39-142 and 148-265; these read YLNH…SIDN and YGDS…LYPF.

It belongs to the cysteine-rich repeat secretory protein family.

The protein localises to the secreted. The sequence is that of Putative cysteine-rich repeat secretory protein 17 (CRRSP17) from Arabidopsis thaliana (Mouse-ear cress).